Here is a 297-residue protein sequence, read N- to C-terminus: Homoserine kinase (297 aa).

Residue 79–89 (PIARGLGSSGA) participates in ATP binding.

The protein belongs to the GHMP kinase family. Homoserine kinase subfamily.

It localises to the cytoplasm. The enzyme catalyses L-homoserine + ATP = O-phospho-L-homoserine + ADP + H(+). It participates in amino-acid biosynthesis; L-threonine biosynthesis; L-threonine from L-aspartate: step 4/5. In terms of biological role, catalyzes the ATP-dependent phosphorylation of L-homoserine to L-homoserine phosphate. This Pyrobaculum aerophilum (strain ATCC 51768 / DSM 7523 / JCM 9630 / CIP 104966 / NBRC 100827 / IM2) protein is Homoserine kinase.